A 240-amino-acid chain; its full sequence is Methylthioribulose-1-phosphate dehydratase (240 aa).

Cysteine 99 serves as a coordination point for substrate. Residues histidine 116 and histidine 118 each coordinate Zn(2+). The active-site Proton donor/acceptor is glutamate 145. Histidine 201 contacts Zn(2+).

This sequence belongs to the aldolase class II family. MtnB subfamily. The cofactor is Zn(2+).

It localises to the cytoplasm. The enzyme catalyses 5-(methylsulfanyl)-D-ribulose 1-phosphate = 5-methylsulfanyl-2,3-dioxopentyl phosphate + H2O. It functions in the pathway amino-acid biosynthesis; L-methionine biosynthesis via salvage pathway; L-methionine from S-methyl-5-thio-alpha-D-ribose 1-phosphate: step 2/6. Functionally, catalyzes the dehydration of methylthioribulose-1-phosphate (MTRu-1-P) into 2,3-diketo-5-methylthiopentyl-1-phosphate (DK-MTP-1-P). The chain is Methylthioribulose-1-phosphate dehydratase from Ajellomyces capsulatus (strain G186AR / H82 / ATCC MYA-2454 / RMSCC 2432) (Darling's disease fungus).